A 262-amino-acid chain; its full sequence is Abhydrolase domain-containing protein AFT2-1 (262 aa).

The Peroxisomal targeting signal type 1 signature appears at 260-262 (SKL).

Belongs to the AB hydrolase superfamily. AKT2 hydrolase family.

The protein localises to the peroxisome. The protein operates within mycotoxin biosynthesis. Abhydrolase domain-containing protein; part of the gene clusters that mediate the biosynthesis of the host-selective toxins (HSTs) AF-toxins responsible for Alternaria black spot of strawberry disease by the strawberry pathotype. AF-toxin I and III are valine derivatives of 2,3-dyhydroxy-isovaleric acid and 2-hydroxy-isovaleric acid respectively, while AF II is an isoleucine derivative of 2-hydroxy-valeric acid. These derivatives are bound to a 9,10-epoxy-8-hydroxy-9-methyl-decatrienoic acid (EDA) moiety. On cellular level, AF-toxins affect plasma membrane of susceptible cells and cause a sudden increase in loss of K(+) after a few minutes of toxin treatment. The aldo-keto reductase AFTS1 catalyzes the conversion of 2-keto-isovaleric acid (2-KIV) to 2-hydroxy-isovaleric acid (2-HIV) by reduction of its ketone to an alcohol. The acyl-CoA ligase AFT1, the hydrolase AFT2 and the enoyl-CoA hydratases AFT3 and AFT6, but also the polyketide synthase AFT9, the acyl-CoA dehydrogenase AFT10, the cytochrome P450 monooxygenase AFT11 and the oxidoreductase AFT12 are all involved in the biosynthesis of the AK-, AF- and ACT-toxin common EDA structural moiety. The exact function of each enzyme, and of additional enzymes identified within the AF-toxin clusters have still to be determined. This chain is Abhydrolase domain-containing protein AFT2-1, found in Alternaria alternata (Alternaria rot fungus).